The sequence spans 303 residues: UDP-3-O-acyl-N-acetylglucosamine deacetylase (303 aa).

3 residues coordinate Zn(2+): histidine 78, histidine 237, and aspartate 241. The active-site Proton donor is histidine 264.

This sequence belongs to the LpxC family. The cofactor is Zn(2+).

The catalysed reaction is a UDP-3-O-[(3R)-3-hydroxyacyl]-N-acetyl-alpha-D-glucosamine + H2O = a UDP-3-O-[(3R)-3-hydroxyacyl]-alpha-D-glucosamine + acetate. It participates in glycolipid biosynthesis; lipid IV(A) biosynthesis; lipid IV(A) from (3R)-3-hydroxytetradecanoyl-[acyl-carrier-protein] and UDP-N-acetyl-alpha-D-glucosamine: step 2/6. Its function is as follows. Catalyzes the hydrolysis of UDP-3-O-myristoyl-N-acetylglucosamine to form UDP-3-O-myristoylglucosamine and acetate, the committed step in lipid A biosynthesis. The protein is UDP-3-O-acyl-N-acetylglucosamine deacetylase of Pseudomonas entomophila (strain L48).